Consider the following 659-residue polypeptide: tRNA uridine 5-carboxymethylaminomethyl modification enzyme MnmG (659 aa).

Position 13-18 (13-18) interacts with FAD; that stretch reads GGGHAG. 281–295 contributes to the NAD(+) binding site; it reads GPRYCPSVEDKINRF.

The protein belongs to the MnmG family. Homodimer. Heterotetramer of two MnmE and two MnmG subunits. The cofactor is FAD.

The protein localises to the cytoplasm. Its function is as follows. NAD-binding protein involved in the addition of a carboxymethylaminomethyl (cmnm) group at the wobble position (U34) of certain tRNAs, forming tRNA-cmnm(5)s(2)U34. This Delftia acidovorans (strain DSM 14801 / SPH-1) protein is tRNA uridine 5-carboxymethylaminomethyl modification enzyme MnmG.